Reading from the N-terminus, the 274-residue chain is Elongation factor Ts (274 aa).

Residues 82 to 85 form an involved in Mg(2+) ion dislocation from EF-Tu region; sequence TDFV.

Belongs to the EF-Ts family.

The protein resides in the cytoplasm. Associates with the EF-Tu.GDP complex and induces the exchange of GDP to GTP. It remains bound to the aminoacyl-tRNA.EF-Tu.GTP complex up to the GTP hydrolysis stage on the ribosome. This Christiangramia forsetii (strain DSM 17595 / CGMCC 1.15422 / KT0803) (Gramella forsetii) protein is Elongation factor Ts.